An 874-amino-acid polypeptide reads, in one-letter code: Valine--tRNA ligase (874 aa).

Residues 1–22 (MTENSQQPQPAPSTELPTQYTP) are disordered. The short motif at 57–67 (PNVTGSLHLGH) is the 'HIGH' region element. The 'KMSKS' region signature appears at 531-535 (KMSKS). An ATP-binding site is contributed by lysine 534. Residues 805 to 871 (VIDFAAERKR…TRITAQLEKL (67 aa)) are a coiled coil.

This sequence belongs to the class-I aminoacyl-tRNA synthetase family. ValS type 1 subfamily. In terms of assembly, monomer.

Its subcellular location is the cytoplasm. The enzyme catalyses tRNA(Val) + L-valine + ATP = L-valyl-tRNA(Val) + AMP + diphosphate. Functionally, catalyzes the attachment of valine to tRNA(Val). As ValRS can inadvertently accommodate and process structurally similar amino acids such as threonine, to avoid such errors, it has a 'posttransfer' editing activity that hydrolyzes mischarged Thr-tRNA(Val) in a tRNA-dependent manner. The polypeptide is Valine--tRNA ligase (Streptomyces coelicolor (strain ATCC BAA-471 / A3(2) / M145)).